Here is a 459-residue protein sequence, read N- to C-terminus: GTPase Der (459 aa).

EngA-type G domains are found at residues 3 to 167 (FTLA…PEPV) and 188 to 363 (IRVA…AVWN). GTP is bound by residues 9–16 (GRPNVGKS), 56–60 (DTAGL), 119–122 (NKSE), 194–201 (GRPNAGKS), 241–245 (DTAGL), and 306–309 (NKWD). Residues 364-448 (RRVPTAALNR…PVRITLREKA (85 aa)) enclose the KH-like domain.

This sequence belongs to the TRAFAC class TrmE-Era-EngA-EngB-Septin-like GTPase superfamily. EngA (Der) GTPase family. Associates with the 50S ribosomal subunit.

In terms of biological role, GTPase that plays an essential role in the late steps of ribosome biogenesis. The chain is GTPase Der from Rhodopseudomonas palustris (strain TIE-1).